A 163-amino-acid polypeptide reads, in one-letter code: 2-amino-4-hydroxy-6-hydroxymethyldihydropteridine pyrophosphokinase (163 aa).

The protein belongs to the HPPK family.

The catalysed reaction is 6-hydroxymethyl-7,8-dihydropterin + ATP = (7,8-dihydropterin-6-yl)methyl diphosphate + AMP + H(+). It functions in the pathway cofactor biosynthesis; tetrahydrofolate biosynthesis; 2-amino-4-hydroxy-6-hydroxymethyl-7,8-dihydropteridine diphosphate from 7,8-dihydroneopterin triphosphate: step 4/4. Its function is as follows. Catalyzes the transfer of pyrophosphate from adenosine triphosphate (ATP) to 6-hydroxymethyl-7,8-dihydropterin, an enzymatic step in folate biosynthesis pathway. The chain is 2-amino-4-hydroxy-6-hydroxymethyldihydropteridine pyrophosphokinase (folK) from Helicobacter pylori (strain ATCC 700392 / 26695) (Campylobacter pylori).